The primary structure comprises 311 residues: UDP-N-acetylenolpyruvoylglucosamine reductase (311 aa).

The FAD-binding PCMH-type domain occupies 34–198 (MGGAADLFIT…LEGTFRLQKG (165 aa)). Residue Arg177 is part of the active site. Catalysis depends on Ser227, which acts as the Proton donor. Residue Glu297 is part of the active site.

This sequence belongs to the MurB family. The cofactor is FAD.

Its subcellular location is the cytoplasm. It carries out the reaction UDP-N-acetyl-alpha-D-muramate + NADP(+) = UDP-N-acetyl-3-O-(1-carboxyvinyl)-alpha-D-glucosamine + NADPH + H(+). It participates in cell wall biogenesis; peptidoglycan biosynthesis. Functionally, cell wall formation. This is UDP-N-acetylenolpyruvoylglucosamine reductase from Shouchella clausii (strain KSM-K16) (Alkalihalobacillus clausii).